The primary structure comprises 375 residues: POU domain, class 3, transcription factor 1-B (375 aa).

3 disordered regions span residues 1 to 29 (MAATAQYLPRNNSLPSNPLMHPDSDRMHQ), 56 to 139 (MSLT…QPLI), and 151 to 200 (MLGP…PSSD). Polar residues-rich tracts occupy residues 107-117 (VHQQTPSSHAW), 129-139 (SPGSNSHQPLI), and 151-160 (MLGPQASSLH). The segment covering 162–178 (SMRDPLHDDPGVHDTHV) has biased composition (basic and acidic residues). The region spanning 194 to 268 (EDAPSSDDLE…LLNKWLEETD (75 aa)) is the POU-specific domain. Positions 286–345 (KRKKRTSIEVGVKGALENHFLKCPKPSAHEITSLADSLQLEKEVVRVWFCNRRQKEKRMT) form a DNA-binding region, homeobox.

It belongs to the POU transcription factor family. Class-3 subfamily.

It localises to the nucleus. In terms of biological role, acts as a transcription factor. May play a role in neuronal differentiation. The protein is POU domain, class 3, transcription factor 1-B (pou3f1-b) of Xenopus laevis (African clawed frog).